Consider the following 224-residue polypeptide: 7-cyano-7-deazaguanine synthase (224 aa).

Residue 10–20 participates in ATP binding; sequence LSGGLDSATVV. Cys189, Cys199, Cys202, and Cys205 together coordinate Zn(2+).

This sequence belongs to the QueC family. Zn(2+) serves as cofactor.

The catalysed reaction is 7-carboxy-7-deazaguanine + NH4(+) + ATP = 7-cyano-7-deazaguanine + ADP + phosphate + H2O + H(+). It participates in purine metabolism; 7-cyano-7-deazaguanine biosynthesis. In terms of biological role, catalyzes the ATP-dependent conversion of 7-carboxy-7-deazaguanine (CDG) to 7-cyano-7-deazaguanine (preQ(0)). This chain is 7-cyano-7-deazaguanine synthase, found in Pseudomonas aeruginosa (strain LESB58).